We begin with the raw amino-acid sequence, 301 residues long: Ornithine carbamoyltransferase (301 aa).

Carbamoyl phosphate contacts are provided by residues Arg-100 and 127–130 (HPCQ). Residues Asn-158, Asp-221, and 225 to 226 (SM) each bind L-ornithine. Cys-260 and Arg-288 together coordinate carbamoyl phosphate.

The protein belongs to the aspartate/ornithine carbamoyltransferase superfamily. OTCase family.

It localises to the cytoplasm. The catalysed reaction is carbamoyl phosphate + L-ornithine = L-citrulline + phosphate + H(+). It participates in amino-acid biosynthesis; L-arginine biosynthesis; L-arginine from L-ornithine and carbamoyl phosphate: step 1/3. Its function is as follows. Reversibly catalyzes the transfer of the carbamoyl group from carbamoyl phosphate (CP) to the N(epsilon) atom of ornithine (ORN) to produce L-citrulline. This chain is Ornithine carbamoyltransferase (argF), found in Vibrio sp. (strain 2693).